Consider the following 333-residue polypeptide: Tetraacyldisaccharide 4'-kinase (333 aa).

55 to 62 (TIGGNGKT) is a binding site for ATP.

It belongs to the LpxK family.

It carries out the reaction a lipid A disaccharide + ATP = a lipid IVA + ADP + H(+). It functions in the pathway glycolipid biosynthesis; lipid IV(A) biosynthesis; lipid IV(A) from (3R)-3-hydroxytetradecanoyl-[acyl-carrier-protein] and UDP-N-acetyl-alpha-D-glucosamine: step 6/6. Its function is as follows. Transfers the gamma-phosphate of ATP to the 4'-position of a tetraacyldisaccharide 1-phosphate intermediate (termed DS-1-P) to form tetraacyldisaccharide 1,4'-bis-phosphate (lipid IVA). The protein is Tetraacyldisaccharide 4'-kinase of Blochmanniella floridana.